The primary structure comprises 523 residues: Cytoplasmic dynein 1 light intermediate chain 1 (523 aa).

The disordered stretch occupies residues 1–25 (MAAVGRVGSFGSSPPGLASTYASGP). 74 to 81 (GEDGAGKT) serves as a coordination point for ATP. Disordered stretches follow at residues 200–219 (PGED…QEDR), 387–434 (PPTA…DPNM), and 457–523 (GSPG…GEAS). S207 carries the post-translational modification Phosphoserine. The residue at position 213 (T213) is a Phosphothreonine. Phosphoserine occurs at positions 398 and 405. At T408 the chain carries Phosphothreonine. 4 positions are modified to phosphoserine: S412, S419, S421, and S427. Residues 412 to 421 (SVSSNVASVS) show a composition bias toward low complexity. The span at 458–473 (SPGGPGVGGSPGGGAA) shows a compositional bias: gly residues. Low complexity predominate over residues 474-485 (GASPSLPPSAKK). Phosphoserine occurs at positions 486 and 510. Positions 506-523 (PASVSPTTPTSPTEGEAS) are enriched in low complexity. A phosphothreonine mark is found at T512, T513, and T515. S516 is subject to Phosphoserine.

This sequence belongs to the dynein light intermediate chain family. Homodimer. The cytoplasmic dynein 1 complex consists of two catalytic heavy chains (HCs) and a number of non-catalytic subunits presented by intermediate chains (ICs), light intermediate chains (LICs) and light chains (LCs); the composition seems to vary in respect to the IC, LIC and LC composition. The heavy chain homodimer serves as a scaffold for the probable homodimeric assembly of the respective non-catalytic subunits. The ICs and LICs bind directly to the HC dimer and the LCs assemble on the IC dimer. Self-associates. Interacts with DYNC1H1; DYNC1LI1 and DYNC1LI2 bind mutually exclusive to DYNC1H1. Interacts with PCNT. Forms a complex with RAB11FIP3 and RAB11A1; the interaction between DYNC1LI1 and RAB11FIP3 is direct and induces DYNC1LI1 localization onto endosomal membrane; the complex regulates endocytic trafficking. Interacts with RUFY3. Phosphorylated during mitosis but not in interphase.

It is found in the cytoplasm. The protein resides in the chromosome. Its subcellular location is the centromere. It localises to the kinetochore. The protein localises to the cytoskeleton. It is found in the spindle pole. The protein resides in the recycling endosome membrane. Acts as one of several non-catalytic accessory components of the cytoplasmic dynein 1 complex that are thought to be involved in linking dynein to cargos and to adapter proteins that regulate dynein function. Cytoplasmic dynein 1 acts as a motor for the intracellular retrograde motility of vesicles and organelles along microtubules. May play a role in binding dynein to membranous organelles or chromosomes. Probably involved in the microtubule-dependent transport of pericentrin. Is required for progress through the spindle assembly checkpoint. The phosphorylated form appears to be involved in the selective removal of MAD1L1 and MAD1L2 but not BUB1B from kinetochores. Forms a functional Rab11/RAB11FIP3/dynein complex onto endosomal membrane that regulates the movement of peripheral sorting endosomes (SE) along microtubule tracks toward the microtubule organizing center/centrosome, generating the endosomal recycling compartment (ERC). In Mus musculus (Mouse), this protein is Cytoplasmic dynein 1 light intermediate chain 1 (Dync1li1).